The following is a 695-amino-acid chain: MAKELAAVYADVSALAMDLCLLSYADPATLDTKSLALTTGKFQSLHGTLLPLLRRQNAHECSGLSLELEHLLENVADALTTLGVCTSRKLSPEEHFSLLHLDITCNKHRSVRFNFYGNWALELKLSLINDVEIFFKRLSSVFYCIGSGSALEGLGEVLRFVGKLRGISPVPGPDLYVSNLPCLECLQEVCLTPNQGTSLQAMLPDTACSHICTPACGEPVRGLFENELKQLGLQTPESIPTTPCQSRVRQDDEIRQSSLMAVGDHHIFGEVTRSVLEISNLIYWSSGHSDATCDGDRDCSHLASLFTHEADMHKRRVDLAGCLGERGTPKHFFDCFRPDSLETLFCGGLFSSVEDTIESLQKDCSSAFYQQVNYTTALQKQNEFYVRLSKLLAAGQLNLGKCSTESCPSEARRQLVGGDKPEEVLRDAKHRQELYLQKVARDGFKKLSDCIRHQGHILSQTLGLRLWGSVIYNEASALQNHFLHRAQFISLPWQDLTVDCPTRFENSKYIKNSLYCQRLGREHVEILTLEFYKLITGPLSKRHTLFPSPPNVTLAQCFEAAGMLPHQKMMVSEMIWPSIEPKDWIEPNFNQFYSFENQDINHLQKRAWEYIRELVLSVSLYNRTWERELKILLTPQGSPGFKEPKPAGLTTGLYLTFETSAPLVLVDKKYGWIFKDLYALLYHHLQLSNHNDSQV.

Residues 182 to 210 (CLECLQEVCLTPNQGTSLQAMLPDTACSH) form a C3H1-type zinc finger. 621–628 (YNRTWERE) contacts ATP.

This sequence belongs to the herpesviridae TRM1 protein family. As to quaternary structure, associates with TRM2 and TRM3 to form the tripartite terminase complex. Interacts with portal protein.

It is found in the host nucleus. In terms of biological role, component of the molecular motor that translocates viral genomic DNA in empty capsid during DNA packaging. Forms a tripartite terminase complex together with TRM2 and TRM3 in the host cytoplasm. Once the complex reaches the host nucleus, it interacts with the capsid portal vertex. This portal forms a ring in which genomic DNA is translocated into the capsid. TRM1 carries an endonuclease activity that plays an important role for the cleavage of concatemeric viral DNA into unit length genomes. The sequence is that of Tripartite terminase subunit 1 from Homo sapiens (Human).